Reading from the N-terminus, the 215-residue chain is Cytidylate kinase (215 aa).

An ATP-binding site is contributed by 10–18 (GPAASGKGT).

This sequence belongs to the cytidylate kinase family. Type 1 subfamily.

It is found in the cytoplasm. The enzyme catalyses CMP + ATP = CDP + ADP. It carries out the reaction dCMP + ATP = dCDP + ADP. The polypeptide is Cytidylate kinase (Bartonella bacilliformis (strain ATCC 35685 / KC583 / Herrer 020/F12,63)).